An 832-amino-acid chain; its full sequence is Disintegrin and metalloproteinase domain-containing protein 23 (832 aa).

The span at 1–10 (MKPPGSSSRQ) shows a compositional bias: polar residues. The interval 1 to 37 (MKPPGSSSRQPPLAGCSLAGASCGPQRGPAGSVPASA) is disordered. The signal sequence occupies residues 1-59 (MKPPGSSSRQPPLAGCSLAGASCGPQRGPAGSVPASAPARTPPCRLLLVLLLLPPLAAS). Positions 28 to 37 (GPAGSVPASA) are enriched in low complexity. A propeptide spanning residues 60 to 286 (SRPRAWGAAA…ELQWLKRRKR (227 aa)) is cleaved from the precursor. Asn-76, Asn-96, Asn-100, and Asn-263 each carry an N-linked (GlcNAc...) asparagine glycan. At 287–792 (AVNPSRGIFE…EGPKGPSATN (506 aa)) the chain is on the extracellular side. In terms of domain architecture, Peptidase M12B spans 299 to 496 (KYLELMIVND…GGGACLFNRP (198 aa)). 3 disulfides stabilise this stretch: Cys-408/Cys-491, Cys-450/Cys-475, and Cys-452/Cys-459. In terms of domain architecture, Disintegrin spans 502–588 (PTECGNGYVE…QCPPNLHKQD (87 aa)). 2 N-linked (GlcNAc...) asparagine glycosylation sites follow: Asn-547 and Asn-548. Cys-560 and Cys-580 are disulfide-bonded. Positions 563–568 (AVNECD) are may bind the integrin receptor. Asn-664 and Asn-732 each carry an N-linked (GlcNAc...) asparagine glycan. The EGF-like domain occupies 732-769 (NMSSCPLDSKGKVCSGHGVCSNEATCICDFTWAGTDCS). Disulfide bonds link Cys-736–Cys-751, Cys-745–Cys-757, and Cys-759–Cys-768. Residues 793-813 (LIIGSIAGAILVAAIVLGGTG) traverse the membrane as a helical segment. Residues 814–832 (WGFKNVKKRRFDPTQQGPI) are Cytoplasmic-facing.

In terms of assembly, can bind to LGI1 and LGI4. Ligand for integrin alpha-V/beta-3. In terms of tissue distribution, highly expressed in the brain and weakly expressed in the heart. In the brain, expressed prominently in the amygdala, caudate nucleus, hypothalamus, thalamus, cerebral cortex and occipital pole.

It is found in the cell membrane. It localises to the secreted. Its function is as follows. May play a role in cell-cell and cell-matrix interactions. This is a non-catalytic metalloprotease-like protein. The protein is Disintegrin and metalloproteinase domain-containing protein 23 (ADAM23) of Homo sapiens (Human).